Consider the following 703-residue polypeptide: DNA ligase (703 aa).

NAD(+)-binding positions include 44 to 48 (DAEYD), 93 to 94 (SL), and glutamate 127. The active-site N6-AMP-lysine intermediate is lysine 129. NAD(+) is bound by residues arginine 150, glutamate 186, lysine 302, and lysine 326. Zn(2+)-binding residues include cysteine 420, cysteine 422, cysteine 444, and cysteine 450. Residues 625-703 (VADSPVAGKT…EDMWFQRIGA (79 aa)) enclose the BRCT domain.

It belongs to the NAD-dependent DNA ligase family. LigA subfamily. Mg(2+) serves as cofactor. Requires Mn(2+) as cofactor.

It catalyses the reaction NAD(+) + (deoxyribonucleotide)n-3'-hydroxyl + 5'-phospho-(deoxyribonucleotide)m = (deoxyribonucleotide)n+m + AMP + beta-nicotinamide D-nucleotide.. Functionally, DNA ligase that catalyzes the formation of phosphodiester linkages between 5'-phosphoryl and 3'-hydroxyl groups in double-stranded DNA using NAD as a coenzyme and as the energy source for the reaction. It is essential for DNA replication and repair of damaged DNA. The sequence is that of DNA ligase from Chelativorans sp. (strain BNC1).